The following is a 232-amino-acid chain: YlmG homolog protein 1-1, chloroplastic (232 aa).

The transit peptide at 1-16 (MAAITALTLRSPVYLP) directs the protein to the chloroplast. Helical transmembrane passes span 147–167 (LTVV…VLMV) and 201–221 (IIPP…AVLG).

It belongs to the YggT family.

The protein localises to the plastid. Its subcellular location is the chloroplast thylakoid membrane. Functionally, required for the proper distribution of nucleoids in chloroplasts. The nucleoid partitioning by YLMG1-1 may be related to chloroplast division processes. The chain is YlmG homolog protein 1-1, chloroplastic from Arabidopsis thaliana (Mouse-ear cress).